Consider the following 376-residue polypeptide: DNA replication and repair protein RecF (376 aa).

Position 30–37 (30–37) interacts with ATP; that stretch reads GNNAQGKS.

Belongs to the RecF family.

It is found in the cytoplasm. Functionally, the RecF protein is involved in DNA metabolism; it is required for DNA replication and normal SOS inducibility. RecF binds preferentially to single-stranded, linear DNA. It also seems to bind ATP. This Trichormus variabilis (strain ATCC 29413 / PCC 7937) (Anabaena variabilis) protein is DNA replication and repair protein RecF.